The primary structure comprises 332 residues: Ubiquinone biosynthesis protein COQ4, mitochondrial (332 aa).

The N-terminal 16 residues, Met-1–Phe-16, are a transit peptide targeting the mitochondrion. Positions 212, 213, 216, and 228 each coordinate Zn(2+).

Belongs to the COQ4 family. Component of a multi-subunit COQ enzyme complex, composed of at least COQ3, COQ4, COQ5, COQ6, COQ7 and COQ9. It depends on Zn(2+) as a cofactor.

Its subcellular location is the mitochondrion inner membrane. It catalyses the reaction a 4-hydroxy-3-methoxy-5-(all-trans-polyprenyl)benzoate + H(+) = a 2-methoxy-6-(all-trans-polyprenyl)phenol + CO2. The protein operates within cofactor biosynthesis; ubiquinone biosynthesis. Functionally, lyase that catalyzes the C1-decarboxylation of 4-hydroxy-3-methoxy-5-(all-trans-polyprenyl)benzoic acid into 2-methoxy-6-(all-trans-polyprenyl)phenol during ubiquinone biosynthesis. The chain is Ubiquinone biosynthesis protein COQ4, mitochondrial from Kluyveromyces lactis (strain ATCC 8585 / CBS 2359 / DSM 70799 / NBRC 1267 / NRRL Y-1140 / WM37) (Yeast).